A 339-amino-acid polypeptide reads, in one-letter code: UDP-N-acetylglucosamine--N-acetylmuramyl-(pentapeptide) pyrophosphoryl-undecaprenol N-acetylglucosamine transferase (339 aa).

UDP-N-acetyl-alpha-D-glucosamine contacts are provided by residues 11–13 (TGG), Asn127, Arg170, Ser188, Ile235, and Gln280.

The protein belongs to the glycosyltransferase 28 family. MurG subfamily.

The protein resides in the cell inner membrane. The catalysed reaction is di-trans,octa-cis-undecaprenyl diphospho-N-acetyl-alpha-D-muramoyl-L-alanyl-D-glutamyl-meso-2,6-diaminopimeloyl-D-alanyl-D-alanine + UDP-N-acetyl-alpha-D-glucosamine = di-trans,octa-cis-undecaprenyl diphospho-[N-acetyl-alpha-D-glucosaminyl-(1-&gt;4)]-N-acetyl-alpha-D-muramoyl-L-alanyl-D-glutamyl-meso-2,6-diaminopimeloyl-D-alanyl-D-alanine + UDP + H(+). It functions in the pathway cell wall biogenesis; peptidoglycan biosynthesis. Cell wall formation. Catalyzes the transfer of a GlcNAc subunit on undecaprenyl-pyrophosphoryl-MurNAc-pentapeptide (lipid intermediate I) to form undecaprenyl-pyrophosphoryl-MurNAc-(pentapeptide)GlcNAc (lipid intermediate II). This chain is UDP-N-acetylglucosamine--N-acetylmuramyl-(pentapeptide) pyrophosphoryl-undecaprenol N-acetylglucosamine transferase, found in Thermotoga petrophila (strain ATCC BAA-488 / DSM 13995 / JCM 10881 / RKU-1).